The primary structure comprises 238 residues: Pyridoxine 5'-phosphate synthase (238 aa).

3-amino-2-oxopropyl phosphate contacts are provided by asparagine 7 and arginine 18. The active-site Proton acceptor is histidine 43. Arginine 45 and histidine 50 together coordinate 1-deoxy-D-xylulose 5-phosphate. Glutamate 70 serves as the catalytic Proton acceptor. Threonine 100 is a 1-deoxy-D-xylulose 5-phosphate binding site. The active-site Proton donor is histidine 190. 3-amino-2-oxopropyl phosphate is bound by residues aspartate 191 and 213 to 214 (GH).

This sequence belongs to the PNP synthase family. Homooctamer; tetramer of dimers.

The protein resides in the cytoplasm. It carries out the reaction 3-amino-2-oxopropyl phosphate + 1-deoxy-D-xylulose 5-phosphate = pyridoxine 5'-phosphate + phosphate + 2 H2O + H(+). It participates in cofactor biosynthesis; pyridoxine 5'-phosphate biosynthesis; pyridoxine 5'-phosphate from D-erythrose 4-phosphate: step 5/5. Its function is as follows. Catalyzes the complicated ring closure reaction between the two acyclic compounds 1-deoxy-D-xylulose-5-phosphate (DXP) and 3-amino-2-oxopropyl phosphate (1-amino-acetone-3-phosphate or AAP) to form pyridoxine 5'-phosphate (PNP) and inorganic phosphate. The chain is Pyridoxine 5'-phosphate synthase from Porphyromonas gingivalis (strain ATCC 33277 / DSM 20709 / CIP 103683 / JCM 12257 / NCTC 11834 / 2561).